The following is a 632-amino-acid chain: MASSPLLATSLPQNQLSTTATARFRLPPPEKLAVLIDKSQSVDEVLQIHAAILRHNLLLHPRYPVLNLKLHRAYASHGKIRHSLALFHQTIDPDLFLFTAAINTASINGLKDQAFLLYVQLLSSEINPNEFTFSSLLKSCSTKSGKLIHTHVLKFGLGIDPYVATGLVDVYAKGGDVVSAQKVFDRMPERSLVSSTAMITCYAKQGNVEAARALFDSMCERDIVSWNVMIDGYAQHGFPNDALMLFQKLLAEGKPKPDEITVVAALSACSQIGALETGRWIHVFVKSSRIRLNVKVCTGLIDMYSKCGSLEEAVLVFNDTPRKDIVAWNAMIAGYAMHGYSQDALRLFNEMQGITGLQPTDITFIGTLQACAHAGLVNEGIRIFESMGQEYGIKPKIEHYGCLVSLLGRAGQLKRAYETIKNMNMDADSVLWSSVLGSCKLHGDFVLGKEIAEYLIGLNIKNSGIYVLLSNIYASVGDYEGVAKVRNLMKEKGIVKEPGISTIEIENKVHEFRAGDREHSKSKEIYTMLRKISERIKSHGYVPNTNTVLQDLEETEKEQSLQVHSERLAIAYGLISTKPGSPLKIFKNLRVCSDCHTVTKLISKITGRKIVMRDRNRFHHFTDGSCSCGDFW.

A chloroplast-targeting transit peptide spans 1–19; it reads MASSPLLATSLPQNQLSTT. PPR repeat units follow at residues 94-128, 129-159, 160-194, 196-221, 222-256, 258-292, 293-323, 324-354, 360-395, and 396-426; these read DLFLFTAAINTASINGLKDQAFLLYVQLLSSEINP, NEFTFSSLLKSCSTKSGKLIHTHVLKFGLGI, DPYVATGLVDVYAKGGDVVSAQKVFDRMPERSLVS, TAMITCYAKQGNVEAARALFDSMCER, DIVSWNVMIDGYAQHGFPNDALMLFQKLLAEGKPK, DEITVVAALSACSQIGALETGRWIHVFVKSSRIRL, NVKVCTGLIDMYSKCGSLEEAVLVFNDTPRK, DIVAWNAMIAGYAMHGYSQDALRLFNEMQGI, TDITFIGTLQACAHAGLVNEGIRIFESMGQEYGIKP, and KIEHYGCLVSLLGRAGQLKRAYETIKNMNMD. A type E motif region spans residues 431–506; that stretch reads LWSSVLGSCK…EPGISTIEIE (76 aa). Residues 497–512 are required for function in RNA editing; that stretch reads EPGISTIEIENKVHEF. Residues 507–537 form a type E(+) motif region; sequence NKVHEFRAGDREHSKSKEIYTMLRKISERIK. Positions 538–632 are type DYW motif; that stretch reads SHGYVPNTNT…DGSCSCGDFW (95 aa).

This sequence belongs to the PPR family. PCMP-H subfamily. Requires Zn(2+) as cofactor.

The protein localises to the plastid. Its subcellular location is the chloroplast. Functionally, plays a major role in single RNA editing events in chloroplasts. Acts as a site-recognition transacting factor involved in the edition of the site 5 of ndhB1 and ndhB2 (ndhB1-5 and ndhB2-5 sites corresponding to cytidine-830), which are plastid-encoded subunits of the NADH-plastoquinone oxidoreductase. May provide the catalytic activity for editing site conversion. This Arabidopsis thaliana (Mouse-ear cress) protein is Pentatricopeptide repeat-containing protein ELI1, chloroplastic.